The following is a 155-amino-acid chain: uncharacterized protein (155 aa).

The N-terminal stretch at methionine 1–alanine 24 is a signal peptide.

This is an uncharacterized protein from Chromohalobacter salexigens (strain ATCC BAA-138 / DSM 3043 / CIP 106854 / NCIMB 13768 / 1H11).